The sequence spans 421 residues: Imidazolonepropionase (421 aa).

Residues histidine 81 and histidine 83 each contribute to the Fe(3+) site. Zn(2+)-binding residues include histidine 81 and histidine 83. The 4-imidazolone-5-propanoate site is built by arginine 90, tyrosine 153, and histidine 186. Position 153 (tyrosine 153) interacts with N-formimidoyl-L-glutamate. Histidine 251 is a binding site for Fe(3+). Histidine 251 lines the Zn(2+) pocket. Glutamate 254 contacts 4-imidazolone-5-propanoate. Fe(3+) is bound at residue aspartate 326. Aspartate 326 contributes to the Zn(2+) binding site. Residues asparagine 328 and glycine 330 each coordinate N-formimidoyl-L-glutamate. Residue serine 331 participates in 4-imidazolone-5-propanoate binding.

It belongs to the metallo-dependent hydrolases superfamily. HutI family. Zn(2+) is required as a cofactor. Requires Fe(3+) as cofactor.

Its subcellular location is the cytoplasm. It catalyses the reaction 4-imidazolone-5-propanoate + H2O = N-formimidoyl-L-glutamate. It participates in amino-acid degradation; L-histidine degradation into L-glutamate; N-formimidoyl-L-glutamate from L-histidine: step 3/3. In terms of biological role, catalyzes the hydrolytic cleavage of the carbon-nitrogen bond in imidazolone-5-propanoate to yield N-formimidoyl-L-glutamate. It is the third step in the universal histidine degradation pathway. This chain is Imidazolonepropionase, found in Streptococcus pyogenes serotype M1.